Consider the following 164-residue polypeptide: Crossover junction endodeoxyribonuclease RuvC (164 aa).

Active-site residues include D7, E67, and D139. The Mg(2+) site is built by D7, E67, and D139.

Belongs to the RuvC family. Homodimer which binds Holliday junction (HJ) DNA. The HJ becomes 2-fold symmetrical on binding to RuvC with unstacked arms; it has a different conformation from HJ DNA in complex with RuvA. In the full resolvosome a probable DNA-RuvA(4)-RuvB(12)-RuvC(2) complex forms which resolves the HJ. It depends on Mg(2+) as a cofactor.

The protein localises to the cytoplasm. The catalysed reaction is Endonucleolytic cleavage at a junction such as a reciprocal single-stranded crossover between two homologous DNA duplexes (Holliday junction).. In terms of biological role, the RuvA-RuvB-RuvC complex processes Holliday junction (HJ) DNA during genetic recombination and DNA repair. Endonuclease that resolves HJ intermediates. Cleaves cruciform DNA by making single-stranded nicks across the HJ at symmetrical positions within the homologous arms, yielding a 5'-phosphate and a 3'-hydroxyl group; requires a central core of homology in the junction. The consensus cleavage sequence is 5'-(A/T)TT(C/G)-3'. Cleavage occurs on the 3'-side of the TT dinucleotide at the point of strand exchange. HJ branch migration catalyzed by RuvA-RuvB allows RuvC to scan DNA until it finds its consensus sequence, where it cleaves and resolves the cruciform DNA. The sequence is that of Crossover junction endodeoxyribonuclease RuvC from Citrifermentans bemidjiense (strain ATCC BAA-1014 / DSM 16622 / JCM 12645 / Bem) (Geobacter bemidjiensis).